The sequence spans 232 residues: Ribosomal RNA large subunit methyltransferase E (232 aa).

The S-adenosyl-L-methionine site is built by G64, W66, D97, D113, and D138. The Proton acceptor role is filled by K178.

It belongs to the class I-like SAM-binding methyltransferase superfamily. RNA methyltransferase RlmE family.

It is found in the cytoplasm. The enzyme catalyses uridine(2552) in 23S rRNA + S-adenosyl-L-methionine = 2'-O-methyluridine(2552) in 23S rRNA + S-adenosyl-L-homocysteine + H(+). Its function is as follows. Specifically methylates the uridine in position 2552 of 23S rRNA at the 2'-O position of the ribose in the fully assembled 50S ribosomal subunit. The sequence is that of Ribosomal RNA large subunit methyltransferase E from Leptothrix cholodnii (strain ATCC 51168 / LMG 8142 / SP-6) (Leptothrix discophora (strain SP-6)).